The sequence spans 140 residues: Cytochrome c-type biogenesis protein CcmE (140 aa).

Over 1-7 (MKRKHKR) the chain is Cytoplasmic. A helical; Signal-anchor for type II membrane protein membrane pass occupies residues 8-28 (LLFVLASFCAAGCALLFILSE). Topologically, residues 29 to 140 (LRESVSFFYT…TIPKALPEPK (112 aa)) are periplasmic. Heme is bound by residues H121 and Y125.

It belongs to the CcmE/CycJ family.

It localises to the cell inner membrane. Functionally, heme chaperone required for the biogenesis of c-type cytochromes. Transiently binds heme delivered by CcmC and transfers the heme to apo-cytochromes in a process facilitated by CcmF and CcmH. This is Cytochrome c-type biogenesis protein CcmE from Anaplasma marginale (strain Florida).